The chain runs to 791 residues: Nuclear cap-binding protein subunit 1-B (791 aa).

A disordered region spans residues 1–24 (MSRRRHSDENDGGQPHKRRRTSEP). The MIF4G domain occupies 28–240 (EDRLESLICR…CLWAQVQKLK (213 aa)). Residues 641–714 (LHSTIRKMNK…SEQKNLFLVI (74 aa)) adopt a coiled-coil conformation. The interval 664 to 687 (QRLAKQHKHRDSDDNDEDSGRKDG) is disordered.

It belongs to the NCBP1 family. In terms of assembly, component of the nuclear cap-binding complex (CBC), a heterodimer composed of ncbp1/cbp80 and ncbp2/cbp20 that interacts with m7GpppG-capped RNA. Component of an alternative nuclear cap-binding complex (CBC) composed of ncbp1/cbp80 and ncbp3.

Its subcellular location is the nucleus. The protein localises to the cytoplasm. Its function is as follows. Component of the cap-binding complex (CBC), which binds cotranscriptionally to the 5'-cap of pre-mRNAs and is involved in various processes such as pre-mRNA splicing, translation regulation, nonsense-mediated mRNA decay, RNA-mediated gene silencing (RNAi) by microRNAs (miRNAs) and mRNA export. The CBC complex is involved in mRNA export from the nucleus, leading to the recruitment of the mRNA export machinery to the 5'-end of mRNA and to mRNA export in a 5' to 3' direction through the nuclear pore. The CBC complex is also involved in mediating U snRNA and intronless mRNAs export from the nucleus. The CBC complex is essential for a pioneer round of mRNA translation, before steady state translation when the CBC complex is replaced by cytoplasmic cap-binding protein eIF4E. The pioneer round of mRNA translation mediated by the CBC complex plays a central role in nonsense-mediated mRNA decay (NMD), NMD only taking place in mRNAs bound to the CBC complex, but not on eIF4E-bound mRNAs. The CBC complex enhances NMD in mRNAs containing at least one exon-junction complex (EJC), promoting the interaction between UPF1 and UPF2. The CBC complex is also involved in 'failsafe' NMD, which is independent of the EJC complex, while it does not participate in Staufen-mediated mRNA decay (SMD). During cell proliferation, the CBC complex is also involved in microRNAs (miRNAs) biogenesis via its interaction with SRRT/ARS2 and is required for miRNA-mediated RNA interference. The CBC complex also acts as a negative regulator of parn, thereby acting as an inhibitor of mRNA deadenylation. In the CBC complex, NCBP1/CBP80 does not bind directly capped RNAs (m7GpppG-capped RNA) but is required to stabilize the movement of the N-terminal loop of NCBP2/CBP20 and lock the CBC into a high affinity cap-binding state with the cap structure. Associates with NCBP3 to form an alternative cap-binding complex (CBC) which plays a key role in mRNA export. The conventional CBC with NCBP2 binds both small nuclear RNA (snRNA) and messenger (mRNA) and is involved in their export from the nucleus whereas the alternative CBC with NCBP3 does not bind snRNA and associates only with mRNA thereby playing a role only in mRNA export. The polypeptide is Nuclear cap-binding protein subunit 1-B (ncbp1-b) (Xenopus laevis (African clawed frog)).